Consider the following 202-residue polypeptide: Large ribosomal subunit protein bL25 (202 aa).

Residues 180–202 form a disordered region; that stretch reads PKQEAFEEDAEPSPGEEPEGENQ. A compositionally biased stretch (acidic residues) spans 185 to 202; it reads FEEDAEPSPGEEPEGENQ.

The protein belongs to the bacterial ribosomal protein bL25 family. CTC subfamily. In terms of assembly, part of the 50S ribosomal subunit; part of the 5S rRNA/L5/L18/L25 subcomplex. Contacts the 5S rRNA. Binds to the 5S rRNA independently of L5 and L18.

Its function is as follows. This is one of the proteins that binds to the 5S RNA in the ribosome where it forms part of the central protuberance. This Bacillus velezensis (strain DSM 23117 / BGSC 10A6 / LMG 26770 / FZB42) (Bacillus amyloliquefaciens subsp. plantarum) protein is Large ribosomal subunit protein bL25.